Reading from the N-terminus, the 198-residue chain is HTH-type transcriptional regulator BetI (198 aa).

In terms of domain architecture, HTH tetR-type spans 8-68 (PIRRQQLIDA…ATMRYLISHL (61 aa)). The segment at residues 31-50 (TIAQIARRAGVSNGIISHYF) is a DNA-binding region (H-T-H motif).

Its pathway is amine and polyamine biosynthesis; betaine biosynthesis via choline pathway [regulation]. Functionally, repressor involved in the biosynthesis of the osmoprotectant glycine betaine. It represses transcription of the choline transporter BetT and the genes of BetAB involved in the synthesis of glycine betaine. The sequence is that of HTH-type transcriptional regulator BetI from Serratia proteamaculans (strain 568).